An 86-amino-acid polypeptide reads, in one-letter code: Progonadoliberin-2 (86 aa).

An N-terminal signal peptide occupies residues 1 to 24; that stretch reads MVSVARLVFMLGPLLCLGAQLSSS. Gln25 carries the post-translational modification Pyrrolidone carboxylic acid. Gly34 carries the glycine amide modification.

Belongs to the GnRH family.

The protein localises to the secreted. Functionally, stimulates the secretion of gonadotropins. This chain is Progonadoliberin-2 (gnrh2), found in Oncorhynchus mykiss (Rainbow trout).